The sequence spans 505 residues: Probable cytosol aminopeptidase (505 aa).

Residues K269 and D274 each coordinate Mn(2+). K281 is an active-site residue. Positions 292, 351, and 353 each coordinate Mn(2+). R355 is an active-site residue.

It belongs to the peptidase M17 family. Mn(2+) is required as a cofactor.

It is found in the cytoplasm. The catalysed reaction is Release of an N-terminal amino acid, Xaa-|-Yaa-, in which Xaa is preferably Leu, but may be other amino acids including Pro although not Arg or Lys, and Yaa may be Pro. Amino acid amides and methyl esters are also readily hydrolyzed, but rates on arylamides are exceedingly low.. It catalyses the reaction Release of an N-terminal amino acid, preferentially leucine, but not glutamic or aspartic acids.. Functionally, presumably involved in the processing and regular turnover of intracellular proteins. Catalyzes the removal of unsubstituted N-terminal amino acids from various peptides. This Rhodococcus erythropolis (strain PR4 / NBRC 100887) protein is Probable cytosol aminopeptidase.